A 225-amino-acid chain; its full sequence is uncharacterized protein (225 aa).

A helical membrane pass occupies residues 12–32 (AGFMMIFVFVIASFLLVLLFF).

Its subcellular location is the cell membrane. This is an uncharacterized protein from Bacillus subtilis (strain 168).